The primary structure comprises 441 residues: Probable cytosolic Fe-S cluster assembly factor v1g210509 (441 aa).

[4Fe-4S] cluster is bound by residues Cys24, Cys72, Cys75, Cys78, Cys196, Cys252, and Cys401.

Belongs to the NARF family.

Its function is as follows. Component of the cytosolic iron-sulfur (Fe/S) protein assembly machinery. Required for maturation of extramitochondrial Fe/S proteins. In Nematostella vectensis (Starlet sea anemone), this protein is Probable cytosolic Fe-S cluster assembly factor v1g210509.